We begin with the raw amino-acid sequence, 260 residues long: Cytochrome c oxidase subunit 2 (260 aa).

The Mitochondrial intermembrane portion of the chain corresponds to 1 to 41 (MIVLKWLFFTISPCDAAEPWQLGFQDAATPIMQGIIDLHHD). The helical transmembrane segment at 42–62 (IFFFLILILVFVLWILVRALW) threads the bilayer. At 63–86 (HFHYKKNAIPQRIVHGTTIEILWT) the chain is on the mitochondrial matrix side. The helical transmembrane segment at 87 to 107 (IFPSIILMFIAIPSFALLYSM) threads the bilayer. Residues 108–260 (DEVVVDPAIT…NQLIPQTGEA (153 aa)) lie on the Mitochondrial intermembrane side of the membrane. The Cu cation site is built by His-187, Cys-222, Glu-224, Cys-226, His-230, and Met-233. A Mg(2+)-binding site is contributed by Glu-224.

It belongs to the cytochrome c oxidase subunit 2 family. Component of the cytochrome c oxidase (complex IV, CIV), a multisubunit enzyme composed of a catalytic core of 3 subunits and several supernumerary subunits. The complex exists as a monomer or a dimer and forms supercomplexes (SCs) in the inner mitochondrial membrane with ubiquinol-cytochrome c oxidoreductase (cytochrome b-c1 complex, complex III, CIII). The cofactor is Cu cation.

It is found in the mitochondrion inner membrane. The enzyme catalyses 4 Fe(II)-[cytochrome c] + O2 + 8 H(+)(in) = 4 Fe(III)-[cytochrome c] + 2 H2O + 4 H(+)(out). Its function is as follows. Component of the cytochrome c oxidase, the last enzyme in the mitochondrial electron transport chain which drives oxidative phosphorylation. The respiratory chain contains 3 multisubunit complexes succinate dehydrogenase (complex II, CII), ubiquinol-cytochrome c oxidoreductase (cytochrome b-c1 complex, complex III, CIII) and cytochrome c oxidase (complex IV, CIV), that cooperate to transfer electrons derived from NADH and succinate to molecular oxygen, creating an electrochemical gradient over the inner membrane that drives transmembrane transport and the ATP synthase. Cytochrome c oxidase is the component of the respiratory chain that catalyzes the reduction of oxygen to water. Electrons originating from reduced cytochrome c in the intermembrane space (IMS) are transferred via the dinuclear copper A center (CU(A)) of subunit 2 and heme A of subunit 1 to the active site in subunit 1, a binuclear center (BNC) formed by heme A3 and copper B (CU(B)). The BNC reduces molecular oxygen to 2 water molecules using 4 electrons from cytochrome c in the IMS and 4 protons from the mitochondrial matrix. This chain is Cytochrome c oxidase subunit 2 (COX2), found in Arabidopsis thaliana (Mouse-ear cress).